The chain runs to 313 residues: Olfactory receptor 51A4 (313 aa).

Over 1–27 (MSIINTSYVEITTFFLVGMPGLEYAHI) the chain is Extracellular. Residue Asn-5 is glycosylated (N-linked (GlcNAc...) asparagine). A helical transmembrane segment spans residues 28 to 48 (WISIPICSMYLIAILGNGTIL). Residues 49–56 (FIIKTEPS) are Cytoplasmic-facing. Residues 57–77 (LHEPMYYFLSMLAMSDLGLSL) form a helical membrane-spanning segment. Residues 78-101 (SSLPTVLSIFLFNAPEISSNACFA) lie on the Extracellular side of the membrane. The cysteines at positions 99 and 191 are disulfide-linked. A helical membrane pass occupies residues 102 to 122 (QEFFIHGFSVLESSVLLIMSF). The Cytoplasmic portion of the chain corresponds to 123-141 (DRFLAIHNPLRYTSILTTV). The chain crosses the membrane as a helical span at residues 142–162 (RVAQIGIVFSFKSMLLVLPFP). The Extracellular portion of the chain corresponds to 163–198 (FTLRNLRYCKKNQLSHSYCLHQDVMKLACSDNRIDV). A helical membrane pass occupies residues 199–218 (IYGFFGALCLMVDFILIAVS). At 219 to 238 (YTLILKTVLGIASKKEQLKA) the chain is on the cytoplasmic side. The helical transmembrane segment at 239–259 (LNTCVSHICAVIIFYLPIINL) threads the bilayer. Residues 260–274 (AVVHRFARHVSPLIN) lie on the Extracellular side of the membrane. The helical transmembrane segment at 275–295 (VLMANVLLLVPPLTNPIVYCV) threads the bilayer. Over 296–313 (KTKQIRVRVVAKLCQRKI) the chain is Cytoplasmic.

Belongs to the G-protein coupled receptor 1 family.

The protein resides in the cell membrane. In terms of biological role, odorant receptor. This is Olfactory receptor 51A4 (OR51A4) from Homo sapiens (Human).